A 472-amino-acid chain; its full sequence is Trigger factor (472 aa).

In terms of domain architecture, PPIase FKBP-type spans Gly174–Pro261. The disordered stretch occupies residues Asn433–Ser472. Over residues Lys439–Lys451 the composition is skewed to basic and acidic residues.

The protein belongs to the FKBP-type PPIase family. Tig subfamily.

It localises to the cytoplasm. The enzyme catalyses [protein]-peptidylproline (omega=180) = [protein]-peptidylproline (omega=0). In terms of biological role, involved in protein export. Acts as a chaperone by maintaining the newly synthesized protein in an open conformation. Functions as a peptidyl-prolyl cis-trans isomerase. This Prochlorococcus marinus (strain NATL1A) protein is Trigger factor.